A 1380-amino-acid chain; its full sequence is DNA-directed RNA polymerase subunit beta (1380 aa).

The protein belongs to the RNA polymerase beta chain family. The RNAP catalytic core consists of 2 alpha, 1 beta, 1 beta' and 1 omega subunit. When a sigma factor is associated with the core the holoenzyme is formed, which can initiate transcription.

It catalyses the reaction RNA(n) + a ribonucleoside 5'-triphosphate = RNA(n+1) + diphosphate. Functionally, DNA-dependent RNA polymerase catalyzes the transcription of DNA into RNA using the four ribonucleoside triphosphates as substrates. This Nitrobacter hamburgensis (strain DSM 10229 / NCIMB 13809 / X14) protein is DNA-directed RNA polymerase subunit beta.